A 79-amino-acid chain; its full sequence is MLVLSRKAGEAIRIMDDIEIKVLAVEGDQVKLGISAPKSVDVHRGEVYEAIQEENKHAAKPVSAEILQAFINHANKAST.

The protein belongs to the CsrA/RsmA family. As to quaternary structure, homodimer; the beta-strands of each monomer intercalate to form a hydrophobic core, while the alpha-helices form wings that extend away from the core.

The protein resides in the cytoplasm. A translational regulator that binds mRNA to regulate translation initiation and/or mRNA stability. Usually binds in the 5'-UTR at or near the Shine-Dalgarno sequence preventing ribosome-binding, thus repressing translation. Its main target seems to be the major flagellin gene, while its function is anatagonized by FliW. The protein is Translational regulator CsrA of Shouchella clausii (strain KSM-K16) (Alkalihalobacillus clausii).